The following is a 2261-amino-acid chain: Phospholipid-transporting ATPase ABCA1 (2261 aa).

A lipid anchor (S-palmitoyl cysteine) is attached at Cys3. Asn14 is a glycosylation site (N-linked (GlcNAc...) asparagine). The helical transmembrane segment at 22-42 (TCQLLLEVAWPLFIFLILISV) threads the bilayer. Cys23 is lipidated: S-palmitoyl cysteine. Topologically, residues 43–639 (RLSYPPYEQH…DIFLRVMSRS (597 aa)) are extracellular. Residues 69 to 80 (WVQGIICNANNP) are annulus domain 1. A disulfide bridge links Cys75 with Cys309. N-linked (GlcNAc...) asparagine glycosylation is found at Asn98, Asn151, Asn161, Asn196, Asn244, Asn292, Asn337, and Asn349. An annulus domain 2 region spans residues 368-379 (SRIIWKALKPLL). 4 N-linked (GlcNAc...) asparagine glycosylation sites follow: Asn400, Asn478, Asn489, and Asn521. The interval 564–594 (ERTNKIKDGYWDPGPRADPFEDMRYVWGGFA) is gateway domain. The next 5 membrane-spanning stretches (helical) occupy residues 640-660 (MPLF…KSIV), 683-703 (FSWF…LVVI), 716-736 (SVVF…CFLI), 745-765 (LAAA…VLCV), and 777-797 (IFAS…FALF). Asn820 carries N-linked (GlcNAc...) asparagine glycosylation. A helical transmembrane segment spans residues 827–847 (MMLFDTFLYGVMTWYIEAVFP). Residues 899 to 1131 (VSIQNLVKVY…LGTGYYLTLV (233 aa)) enclose the ABC transporter 1 domain. An ATP-binding site is contributed by 933–940 (GHNGAGKT). Residues 941–961 (TTMSILTGLFPPTSGTAYILG) form a helical membrane-spanning segment. At Ser1042 the chain carries Phosphoserine; by PKA. Residues Cys1110 and Cys1111 are each lipidated (S-palmitoyl cysteine). N-linked (GlcNAc...) asparagine glycans are attached at residues Asn1144 and Asn1294. The segment at 1285 to 1310 (FTEDDAVDPNDSDIDPESRETDLLSG) is disordered. The span at 1287–1299 (EDDAVDPNDSDID) shows a compositional bias: acidic residues. Ser1296 carries the post-translational modification Phosphoserine. Residues 1351-1371 (IVLPAVFVCIALVFSLIVPPF) traverse the membrane as a helical segment. Topologically, residues 1372–1656 (GKYPSLELQP…ALMTTSVDVL (285 aa)) are extracellular. Residue Asn1453 is glycosylated (N-linked (GlcNAc...) asparagine). Cys1463 and Cys1477 are joined by a disulfide. N-linked (GlcNAc...) asparagine glycans are attached at residues Asn1499, Asn1504, and Asn1637. Transmembrane regions (helical) follow at residues 1657 to 1677 (VSIC…VFLI), 1703 to 1723 (FVWD…IFIC), 1735 to 1755 (LPVL…LMYP), 1768 to 1788 (VVLT…TFVL), 1802 to 1822 (ILKS…LIDM), and 1852 to 1872 (NLFA…LIQY). In terms of domain architecture, ABC transporter 2 spans 1912 to 2144 (LEIKELTKIY…FGDGYTIVVR (233 aa)). 1946-1953 (GVNGAGKS) provides a ligand contact to ATP. Asn2044 is a glycosylation site (N-linked (GlcNAc...) asparagine). Phosphoserine; by PKA is present on Ser2054. Asn2238 is a glycosylation site (N-linked (GlcNAc...) asparagine).

This sequence belongs to the ABC transporter superfamily. ABCA family. Interacts with MEGF10. May interact with APOE1; functionally associated with APOE1 in the biogenesis of HDLs. Interacts with ABCA8; this interaction potentiates cholesterol efflux. Interacts with ABCA12 and NR1H2; this interaction is required for ABCA1 localization to the cell surface and is necessary for its normal activity and stability. Phosphorylation on Ser-2054 regulates phospholipid efflux. In terms of processing, palmitoylated by ZDHHC8. Palmitoylation is essential for localization to the plasma membrane. As to expression, widely expressed in adult tissues. Highest levels are found in pregnant uterus and uterus.

It is found in the cell membrane. The protein localises to the endosome. The enzyme catalyses ATP + H2O + phospholipidSide 1 = ADP + phosphate + phospholipidSide 2.. It carries out the reaction a 1,2-diacyl-sn-glycero-3-phosphocholine(out) + ATP + H2O = a 1,2-diacyl-sn-glycero-3-phosphocholine(in) + ADP + phosphate + H(+). The catalysed reaction is a 1,2-diacyl-sn-glycero-3-phospho-L-serine(out) + ATP + H2O = a 1,2-diacyl-sn-glycero-3-phospho-L-serine(in) + ADP + phosphate + H(+). It catalyses the reaction a sphingomyelin(in) + ATP + H2O = a sphingomyelin(out) + ADP + phosphate + H(+). The enzyme catalyses cholesterol(in) + ATP + H2O = cholesterol(out) + ADP + phosphate + H(+). With respect to regulation, ATPase activity is decreased by cholesterol and ceramide. ATPase activity is stimulated by phosphatidylcholine and to a lesser degree by phosphatidylserine and sphingomyelin. Phospholipid translocase activity is highly reduced by berylium fluoride and aluminum flouride and reduced by N-ethylmaleimide. Catalyzes the translocation of specific phospholipids from the cytoplasmic to the extracellular/lumenal leaflet of membrane coupled to the hydrolysis of ATP. Thereby, participates in phospholipid transfer to apolipoproteins to form nascent high density lipoproteins/HDLs. Transports preferentially phosphatidylcholine over phosphatidylserine. May play a similar role in the efflux of intracellular cholesterol to apolipoproteins and the formation of nascent high density lipoproteins/HDLs. Translocates phospholipids from the outer face of the plasma membrane and forces it through its gateway and annulus into an elongated hydrophobic tunnel in its extracellular domain. In Mus musculus (Mouse), this protein is Phospholipid-transporting ATPase ABCA1.